Reading from the N-terminus, the 550-residue chain is Glucose-6-phosphate isomerase (550 aa).

Glutamate 356 (proton donor) is an active-site residue. Residues histidine 387 and lysine 515 contribute to the active site.

The protein belongs to the GPI family.

It localises to the cytoplasm. It carries out the reaction alpha-D-glucose 6-phosphate = beta-D-fructose 6-phosphate. The protein operates within carbohydrate biosynthesis; gluconeogenesis. Its pathway is carbohydrate degradation; glycolysis; D-glyceraldehyde 3-phosphate and glycerone phosphate from D-glucose: step 2/4. Its function is as follows. Catalyzes the reversible isomerization of glucose-6-phosphate to fructose-6-phosphate. This Syntrophobacter fumaroxidans (strain DSM 10017 / MPOB) protein is Glucose-6-phosphate isomerase.